Here is a 43-residue protein sequence, read N- to C-terminus: Protein PsbN (43 aa).

Residues 5-27 (TLVAIFISCSLVSFTGYALYTAF) form a helical membrane-spanning segment.

This sequence belongs to the PsbN family.

The protein localises to the plastid. It localises to the chloroplast thylakoid membrane. Its function is as follows. May play a role in photosystem I and II biogenesis. The protein is Protein PsbN of Exsertotheca crispa (Moss).